The sequence spans 453 residues: Elongation factor 1-alpha (453 aa).

One can recognise a tr-type G domain in the interval 5–230 (KTHINIVVIG…DAIVEPKRPH (226 aa)). Residues 14-21 (GHVDAGKS) form a G1 region. Position 14 to 21 (14 to 21 (GHVDAGKS)) interacts with GTP. The interval 70 to 74 (GITID) is G2. The G3 stretch occupies residues 91 to 94 (DAPG). GTP contacts are provided by residues 91 to 95 (DAPGH) and 153 to 156 (NKMD). Positions 153 to 156 (NKMD) are G4. The segment at 194-196 (SGW) is G5.

It belongs to the TRAFAC class translation factor GTPase superfamily. Classic translation factor GTPase family. EF-Tu/EF-1A subfamily. As to quaternary structure, binds to actin.

It localises to the cytoplasm. In terms of biological role, this protein promotes the GTP-dependent binding of aminoacyl-tRNA to the A-site of ribosomes during protein biosynthesis. It is also an abundant actin filament bundling protein. The sequence is that of Elongation factor 1-alpha (eef1a2) from Dictyostelium discoideum (Social amoeba).